The chain runs to 735 residues: Funoran endo-beta-hydrolase (735 aa).

An N-terminal signal peptide occupies residues 1 to 27 (MRVKSVYKKLSVSFILVMLSASQEVNS). Catalysis depends on Glu200, which acts as the Proton donor. The active-site Nucleophile is the Glu322.

It belongs to the glycosyl hydrolase 86 family.

It carries out the reaction Endohydrolysis of beta-(1-&gt;4)-linkages between beta-D-galactopyranose-6-sulfate and 3,6-anhydro-alpha-L-galactopyranose units in funoran.. The catalysed reaction is Hydrolysis of (1-&gt;4)-beta-D-galactosidic linkages in agarose, giving the tetramer as the predominant product.. Agarase activity is enhanced in the presence of NaCl. Agarase activity is significantly inhibited by Zn(2+) and slightly activated by several divalent ions including Mg(2+), Cd(2+) and Ca(2+). Its function is as follows. Endohydrolase that cleaves the beta-1,4 glycosidic bond between beta-D-galactopyranose-6-sulfate (G6S) and 3,6-anhydro-alpha-L-galactopyranose (LA) unit of funoran, a polysaccharide produced by red algae of the genus Gloiopeltis. It releases the disaccharide LA-G6S as the predominant end product. Also acts as a random endo-acting beta-agarase, which can hydrolyze agarose tetrasaccharides and hexasaccharides, and produces disaccharides as smallest products. Besides typical agarose oligosaccharides, it can use methylated galactoses. The enzyme exhibits higher catalytic efficiency towards agarose, but binds funoran preferentially. Has no activity on porphyran. This Wenyingzhuangia aestuarii protein is Funoran endo-beta-hydrolase.